Here is a 180-residue protein sequence, read N- to C-terminus: GTP cyclohydrolase 1 (180 aa).

Cys-71, His-74, and Cys-142 together coordinate Zn(2+).

Belongs to the GTP cyclohydrolase I family. As to quaternary structure, toroid-shaped homodecamer, composed of two pentamers of five dimers.

It catalyses the reaction GTP + H2O = 7,8-dihydroneopterin 3'-triphosphate + formate + H(+). It functions in the pathway cofactor biosynthesis; 7,8-dihydroneopterin triphosphate biosynthesis; 7,8-dihydroneopterin triphosphate from GTP: step 1/1. This Helicobacter pylori (strain HPAG1) protein is GTP cyclohydrolase 1.